A 333-amino-acid chain; its full sequence is Methionyl-tRNA formyltransferase (333 aa).

106 to 109 is a binding site for (6S)-5,6,7,8-tetrahydrofolate; the sequence is SLLP.

It belongs to the Fmt family.

The catalysed reaction is L-methionyl-tRNA(fMet) + (6R)-10-formyltetrahydrofolate = N-formyl-L-methionyl-tRNA(fMet) + (6S)-5,6,7,8-tetrahydrofolate + H(+). Attaches a formyl group to the free amino group of methionyl-tRNA(fMet). The formyl group appears to play a dual role in the initiator identity of N-formylmethionyl-tRNA by promoting its recognition by IF2 and preventing the misappropriation of this tRNA by the elongation apparatus. In Elusimicrobium minutum (strain Pei191), this protein is Methionyl-tRNA formyltransferase.